The primary structure comprises 391 residues: Probable tRNA sulfurtransferase (391 aa).

The 108-residue stretch at 60–167 (DEIIDHIKKV…KDNCYVYTDR (108 aa)) folds into the THUMP domain. Residues 185–186 (LL), 210–211 (HF), R267, G289, and Q298 contribute to the ATP site.

Belongs to the ThiI family.

It is found in the cytoplasm. It catalyses the reaction [ThiI sulfur-carrier protein]-S-sulfanyl-L-cysteine + a uridine in tRNA + 2 reduced [2Fe-2S]-[ferredoxin] + ATP + H(+) = [ThiI sulfur-carrier protein]-L-cysteine + a 4-thiouridine in tRNA + 2 oxidized [2Fe-2S]-[ferredoxin] + AMP + diphosphate. The catalysed reaction is [ThiS sulfur-carrier protein]-C-terminal Gly-Gly-AMP + S-sulfanyl-L-cysteinyl-[cysteine desulfurase] + AH2 = [ThiS sulfur-carrier protein]-C-terminal-Gly-aminoethanethioate + L-cysteinyl-[cysteine desulfurase] + A + AMP + 2 H(+). Its pathway is cofactor biosynthesis; thiamine diphosphate biosynthesis. Catalyzes the ATP-dependent transfer of a sulfur to tRNA to produce 4-thiouridine in position 8 of tRNAs, which functions as a near-UV photosensor. Also catalyzes the transfer of sulfur to the sulfur carrier protein ThiS, forming ThiS-thiocarboxylate. This is a step in the synthesis of thiazole, in the thiamine biosynthesis pathway. The sulfur is donated as persulfide by IscS. In Finegoldia magna (strain ATCC 29328 / DSM 20472 / WAL 2508) (Peptostreptococcus magnus), this protein is Probable tRNA sulfurtransferase.